The sequence spans 1021 residues: 2-oxoglutarate dehydrogenase complex component E1 (1021 aa).

A mitochondrion-targeting transit peptide spans 1–40 (MFNLRTCASKLRPLTASQTIRSLKHNRPAAPRTFQQFRCL). Ca(2+)-binding residues include His-142, Asp-155, and Asp-157. Thiamine diphosphate contacts are provided by Arg-311, Asp-410, Asn-443, and Ile-445. The Mg(2+) site is built by Asp-410, Asn-443, and Ile-445. Residue Lys-533 forms a Glycyl lysine isopeptide (Lys-Gly) (interchain with G-Cter in ubiquitin) linkage. Gln-675 contributes to the thiamine diphosphate binding site.

This sequence belongs to the alpha-ketoglutarate dehydrogenase family. As to quaternary structure, homodimer. The 2-oxoglutarate dehydrogenase complex is composed of OGDH (2-oxoglutarate dehydrogenase; E1), DLST (dihydrolipoamide succinyltransferase; E2) and DLD (dihydrolipoamide dehydrogenase; E3). It contains multiple copies of the three enzymatic components (E1, E2 and E3). In the nucleus, the 2-oxoglutarate dehydrogenase complex associates with kat2a. It depends on thiamine diphosphate as a cofactor. The cofactor is Mg(2+). As to expression, expressed in the brain.

It is found in the mitochondrion. It localises to the nucleus. It catalyses the reaction N(6)-[(R)-lipoyl]-L-lysyl-[protein] + 2-oxoglutarate + H(+) = N(6)-[(R)-S(8)-succinyldihydrolipoyl]-L-lysyl-[protein] + CO2. Calcium ions and ADP stimulate, whereas ATP and NADH reduce catalytic activity. Functionally, 2-oxoglutarate dehydrogenase (E1o) component of the 2-oxoglutarate dehydrogenase complex (OGDHC). Participates in the first step, rate limiting for the overall conversion of 2-oxoglutarate to succinyl-CoA and CO(2) catalyzed by the whole OGDHC. Catalyzes the irreversible decarboxylation of 2-oxoglutarate (alpha-ketoglutarate) via the thiamine diphosphate (ThDP) cofactor and subsequent transfer of the decarboxylated acyl intermediate on an oxidized dihydrolipoyl group that is covalently amidated to the E2 enzyme (dihydrolipoyllysine-residue succinyltransferase or DLST). Plays a key role in the Krebs (citric acid) cycle, which is a common pathway for oxidation of fuel molecules, including carbohydrates, fatty acids, and amino acids. Can catalyze the decarboxylation of 2-oxoadipate in vitro, but at a much lower rate than 2-oxoglutarate. Mainly active in the mitochondrion. A fraction of the 2-oxoglutarate dehydrogenase complex also localizes in the nucleus and is required for lysine succinylation of histones: associates with KAT2A on chromatin and provides succinyl-CoA to histone succinyltransferase KAT2A. This Xenopus laevis (African clawed frog) protein is 2-oxoglutarate dehydrogenase complex component E1 (ogdh).